A 409-amino-acid polypeptide reads, in one-letter code: Phosphoglycerate kinase (409 aa).

Substrate is bound by residues 22–24 (DLN), Arg-37, 60–63 (HLSR), Arg-122, and Arg-164. ATP-binding positions include Lys-215, Glu-338, and 365-368 (GGDS).

This sequence belongs to the phosphoglycerate kinase family. In terms of assembly, monomer.

The protein resides in the cytoplasm. The enzyme catalyses (2R)-3-phosphoglycerate + ATP = (2R)-3-phospho-glyceroyl phosphate + ADP. It participates in carbohydrate degradation; glycolysis; pyruvate from D-glyceraldehyde 3-phosphate: step 2/5. The sequence is that of Phosphoglycerate kinase (pgk) from Mycoplasma pneumoniae (strain ATCC 29342 / M129 / Subtype 1) (Mycoplasmoides pneumoniae).